Reading from the N-terminus, the 306-residue chain is Ribonuclease Z (306 aa).

Residues His-63, His-65, Asp-67, His-68, His-140, Asp-211, and His-269 each contribute to the Zn(2+) site. Residue Asp-67 is the Proton acceptor of the active site.

Belongs to the RNase Z family. Homodimer. Requires Zn(2+) as cofactor.

The enzyme catalyses Endonucleolytic cleavage of RNA, removing extra 3' nucleotides from tRNA precursor, generating 3' termini of tRNAs. A 3'-hydroxy group is left at the tRNA terminus and a 5'-phosphoryl group is left at the trailer molecule.. Functionally, zinc phosphodiesterase, which displays some tRNA 3'-processing endonuclease activity. Probably involved in tRNA maturation, by removing a 3'-trailer from precursor tRNA. This chain is Ribonuclease Z, found in Listeria monocytogenes serotype 4a (strain HCC23).